Here is a 312-residue protein sequence, read N- to C-terminus: Malate dehydrogenase (312 aa).

Residues 7–13 (GAAGGIG) and Asp34 contribute to the NAD(+) site. Substrate contacts are provided by Arg81 and Arg87. Residues Asn94 and 117–119 (ITN) each bind NAD(+). The substrate site is built by Asn119 and Arg153. The active-site Proton acceptor is the His177. Met227 lines the NAD(+) pocket.

It belongs to the LDH/MDH superfamily. MDH type 1 family. In terms of assembly, homodimer.

It carries out the reaction (S)-malate + NAD(+) = oxaloacetate + NADH + H(+). Its function is as follows. Catalyzes the reversible oxidation of malate to oxaloacetate. This Moritella sp. (strain 5710) protein is Malate dehydrogenase (mdh).